The following is a 305-amino-acid chain: 5'-hydroxyaverantin dehydrogenase stcG (305 aa).

Residues Ser-25, Leu-27, Gln-48, Asp-68, Tyr-186, Lys-190, and Ser-221 each contribute to the NADP(+) site. Catalysis depends on Tyr-186, which acts as the Proton acceptor. Lys-190 serves as the catalytic Lowers pKa of active site Tyr.

It belongs to the short-chain dehydrogenases/reductases (SDR) family.

It carries out the reaction (1'S,5'S)-5'-hydroxyaverantin + NAD(+) = (S)-5'-oxoaverantin + NADH + H(+). The enzyme catalyses (1'S,5'R)-5'-hydroxyaverantin + NAD(+) = (S)-5'-oxoaverantin + NADH + 2 H(+). Its pathway is mycotoxin biosynthesis; sterigmatocystin biosynthesis. Functionally, 5'-hydroxyaverantin dehydrogenase; part of the gene cluster that mediates the biosynthesis of sterigmatocystin (ST), a polyketide-derived furanocoumarin which is part of the most toxic and carcinogenic compounds among the known mycotoxins. The first step in the biosynthesis of sterigmatocystin is the production of hexanoate by the fatty acid synthase (FAS) units stcJ and stcK. The polyketide backbone is assembled by the non-reducing polyketide synthase stcA by condensation of the starter hexanoyl-CoA and 7 malonyl-CoA extender units followed by cyclization and release of norsolorinic acid. Norsolorinic acid is the first stable intermediate in the biosynthesis of sterigmatocystin and is converted into averantin (AVN) by the ketoreductase stcE which reduces the hexanoate ketone to an alcohol. Averantin is then oxidized into 5'-hydroxyaverantin (HAVN) by the cytochrome P450 monooxygenase stcF. 5'-hydroxyaverantin is further converted to 5'-oxyaverantin (OAVN) by the 5'-hydroxyaverantin dehydrogenase stcG. The next step is the conversion of OAVN into averufin (AVF) which is catalyzed by a yet to be identified enzyme. The cytochrome P450 monooxygenase stcB and the flavin-binding monooxygenase stcW are both required for the conversion of averufin to 1-hydroxyversicolorone. The esterase stcI probably catalyzes the formation of versiconal hemiacetal acetate from 1-hydroxyversicolorone. The oxydoreductase stcN then probably catalyzes the biosynthetic step from versiconal to versicolorin B (VERB). The next step is performed by the versicolorin B desaturase stcL to produce versicolorin A (VERA). The ketoreductase stcU and the cytochrome P450 monooxygenase stcS are involved in the conversion of versicolorin A to demethylsterigmatocystin. The Baeyer-Villiger oxidas stcQ and the reductase stcR might be involved in the biosynthetic step from versicolorin A to demethylsterigmatocystin. The final step in the biosynthesis of sterigmatocystin is the methylation of demethylsterigmatocystin catalyzed by the methyltransferase stcP. The sequence is that of 5'-hydroxyaverantin dehydrogenase stcG from Emericella nidulans (strain FGSC A4 / ATCC 38163 / CBS 112.46 / NRRL 194 / M139) (Aspergillus nidulans).